Reading from the N-terminus, the 395-residue chain is Elongation factor Tu (395 aa).

Residues 10–205 (KVHMNVGTIG…TMDEYFKDPV (196 aa)) enclose the tr-type G domain. Residues 19–26 (GHVDHGKT) form a G1 region. A GTP-binding site is contributed by 19 to 26 (GHVDHGKT). T26 lines the Mg(2+) pocket. Positions 60-64 (GITIN) are G2. The G3 stretch occupies residues 81-84 (DCPG). GTP contacts are provided by residues 81 to 85 (DCPGH) and 136 to 139 (NKVD). Residues 136 to 139 (NKVD) form a G4 region. Positions 173–175 (SAF) are G5.

This sequence belongs to the TRAFAC class translation factor GTPase superfamily. Classic translation factor GTPase family. EF-Tu/EF-1A subfamily. Monomer.

It localises to the cytoplasm. It carries out the reaction GTP + H2O = GDP + phosphate + H(+). Its function is as follows. GTP hydrolase that promotes the GTP-dependent binding of aminoacyl-tRNA to the A-site of ribosomes during protein biosynthesis. This is Elongation factor Tu from Treponema denticola (strain ATCC 35405 / DSM 14222 / CIP 103919 / JCM 8153 / KCTC 15104).